The following is a 308-amino-acid chain: Elongation factor Ts (308 aa).

An involved in Mg(2+) ion dislocation from EF-Tu region spans residues 80–83 (TDFV).

It belongs to the EF-Ts family.

It localises to the cytoplasm. Functionally, associates with the EF-Tu.GDP complex and induces the exchange of GDP to GTP. It remains bound to the aminoacyl-tRNA.EF-Tu.GTP complex up to the GTP hydrolysis stage on the ribosome. The polypeptide is Elongation factor Ts (Rhizobium etli (strain ATCC 51251 / DSM 11541 / JCM 21823 / NBRC 15573 / CFN 42)).